A 1291-amino-acid chain; its full sequence is Vigilin 1 (1291 aa).

Over residues 1–39 (MEHLSNLEQPTTMDSYDFQKLTNDENLQGTESQVPSGSK) the composition is skewed to polar residues. 2 disordered regions span residues 1–45 (MEHL…STNG) and 70–91 (HENA…KPAI). A compositionally biased stretch (low complexity) spans 73 to 88 (AQQGKKQNNSKSFSKK). Ser115 is modified (phosphoserine). Residues 124-148 (TSVAGSDSVSRDKIPFSASSRASST) form a disordered region. KH domains lie at 166 to 229 (ILSP…RRQI), 236 to 328 (RETK…QKDI), 339 to 405 (TTVR…ALYL), 416 to 486 (TIPT…NSTI), 575 to 644 (SKFY…LADL), 658 to 726 (IVSE…VSEI), 741 to 798 (SHVE…AARI), 808 to 883 (DTIL…KQEL), 894 to 957 (AYTS…IKEI), 967 to 1040 (LVEK…ETRL), 1050 to 1114 (QVEE…KEMI), and 1219 to 1280 (NCIA…KDLI). A disordered region spans residues 266–303 (TSTRIQIPKRNNTANESSDDAKKPEKEENSAASTLDDL). The segment covering 268–281 (TRIQIPKRNNTANE) has biased composition (polar residues). Positions 284 to 294 (DDAKKPEKEEN) are enriched in basic and acidic residues. The tract at residues 845 to 865 (PREDDSSNSTGNELMKPTSPD) is disordered. A Phosphoserine modification is found at Ser934. A Phosphothreonine modification is found at Thr935.

It is found in the endoplasmic reticulum. The protein localises to the cytoplasm. Its function is as follows. Required for cell survival under thermal stress. This chain is Vigilin 1 (vgl1), found in Schizosaccharomyces pombe (strain 972 / ATCC 24843) (Fission yeast).